We begin with the raw amino-acid sequence, 404 residues long: Multidrug resistance protein MdtG (404 aa).

A run of 11 helical transmembrane segments spans residues 19–39, 56–76, 90–110, 113–133, 144–164, 171–191, 222–242, 254–274, 288–308, 317–337, and 376–396; these read LGCF…PLYV, LVFS…GGLA, LGMA…QFLI, ALLG…ATQV, TLST…GLLA, PVFF…FFFI, LFVT…ILTL, IAFI…LSAP, ILIV…FVQT, FLLG…LVYN, and AVFC…WNSL.

It belongs to the major facilitator superfamily. DHA1 family. MdtG (TC 2.A.1.2.20) subfamily.

The protein resides in the cell inner membrane. This chain is Multidrug resistance protein MdtG, found in Salmonella schwarzengrund (strain CVM19633).